The primary structure comprises 183 residues: UPF0398 protein PEPE_0933 (183 aa).

It belongs to the UPF0398 family.

This chain is UPF0398 protein PEPE_0933, found in Pediococcus pentosaceus (strain ATCC 25745 / CCUG 21536 / LMG 10740 / 183-1w).